A 938-amino-acid polypeptide reads, in one-letter code: Isoleucine--tRNA ligase (938 aa).

Residues 58 to 68 carry the 'HIGH' region motif; that stretch reads PYANGSIHIGH. Lysine 183 carries the N6-acetyllysine modification. Residue glutamate 561 participates in L-isoleucyl-5'-AMP binding. The 'KMSKS' region motif lies at 602 to 606; it reads KMSKS. ATP is bound at residue lysine 605. Zn(2+)-binding residues include cysteine 901, cysteine 904, cysteine 921, and cysteine 924.

It belongs to the class-I aminoacyl-tRNA synthetase family. IleS type 1 subfamily. As to quaternary structure, monomer. Requires Zn(2+) as cofactor.

The protein resides in the cytoplasm. The catalysed reaction is tRNA(Ile) + L-isoleucine + ATP = L-isoleucyl-tRNA(Ile) + AMP + diphosphate. Catalyzes the attachment of isoleucine to tRNA(Ile). As IleRS can inadvertently accommodate and process structurally similar amino acids such as valine, to avoid such errors it has two additional distinct tRNA(Ile)-dependent editing activities. One activity is designated as 'pretransfer' editing and involves the hydrolysis of activated Val-AMP. The other activity is designated 'posttransfer' editing and involves deacylation of mischarged Val-tRNA(Ile). This is Isoleucine--tRNA ligase from Escherichia coli O17:K52:H18 (strain UMN026 / ExPEC).